The chain runs to 268 residues: 4-hydroxy-tetrahydrodipicolinate reductase (268 aa).

NAD(+)-binding positions include 10 to 15 (GASGRM) and Asp36. Position 37 (Arg37) interacts with NADP(+). NAD(+)-binding positions include 99-101 (GTT) and 123-126 (SANM). The active-site Proton donor/acceptor is His156. Position 157 (His157) interacts with (S)-2,3,4,5-tetrahydrodipicolinate. Catalysis depends on Lys160, which acts as the Proton donor. 166-167 (GT) lines the (S)-2,3,4,5-tetrahydrodipicolinate pocket.

It belongs to the DapB family.

It localises to the cytoplasm. It catalyses the reaction (S)-2,3,4,5-tetrahydrodipicolinate + NAD(+) + H2O = (2S,4S)-4-hydroxy-2,3,4,5-tetrahydrodipicolinate + NADH + H(+). The catalysed reaction is (S)-2,3,4,5-tetrahydrodipicolinate + NADP(+) + H2O = (2S,4S)-4-hydroxy-2,3,4,5-tetrahydrodipicolinate + NADPH + H(+). Its pathway is amino-acid biosynthesis; L-lysine biosynthesis via DAP pathway; (S)-tetrahydrodipicolinate from L-aspartate: step 4/4. In terms of biological role, catalyzes the conversion of 4-hydroxy-tetrahydrodipicolinate (HTPA) to tetrahydrodipicolinate. The polypeptide is 4-hydroxy-tetrahydrodipicolinate reductase (Burkholderia pseudomallei (strain 1710b)).